A 298-amino-acid chain; its full sequence is MATTSIAWQQTASRVQQFYRLTKPRVVSLIVFTAVIGMFLSVPGVVPLDTLIFATVGIAFVAGAAAAVNCLVEQKIDAVMARTRGRPLPRGTVTSPETFVFLALVGGAGLLILHQLVNPLTMWLTLGTFVGYAIIYTVILKPMTPQNIVIGGASGAMPPVLGWAAVTGEVSADALLLFLIIFAWTPPHFWALALYRKLEYAKVGMPMLPVTHGDKFTRLHVLLYTLILIAVTLMPYATQMSGLIYLAGAIVLDVIFLYYAVKIYLNYSDQLARSAFRYSILYLAGLFAVLLVDHYIRF.

9 helical membrane-spanning segments follow: residues 26-46, 52-72, 99-119, 120-140, 148-168, 174-194, 219-239, 241-261, and 276-296; these read VVSL…PGVV, IFAT…NCLV, FVFL…LVNP, LTMW…TVIL, IVIG…AVTG, ALLL…ALAL, LHVL…YATQ, SGLI…YYAV, and FRYS…DHYI.

Belongs to the UbiA prenyltransferase family. Protoheme IX farnesyltransferase subfamily.

The protein localises to the cell inner membrane. It catalyses the reaction heme b + (2E,6E)-farnesyl diphosphate + H2O = Fe(II)-heme o + diphosphate. It participates in porphyrin-containing compound metabolism; heme O biosynthesis; heme O from protoheme: step 1/1. Its function is as follows. Converts heme B (protoheme IX) to heme O by substitution of the vinyl group on carbon 2 of heme B porphyrin ring with a hydroxyethyl farnesyl side group. The chain is Protoheme IX farnesyltransferase from Nitrosospira multiformis (strain ATCC 25196 / NCIMB 11849 / C 71).